Consider the following 193-residue polypeptide: Acyl carrier protein phosphodiesterase (193 aa).

The protein belongs to the AcpH family.

The enzyme catalyses holo-[ACP] + H2O = apo-[ACP] + (R)-4'-phosphopantetheine + H(+). Its function is as follows. Converts holo-ACP to apo-ACP by hydrolytic cleavage of the phosphopantetheine prosthetic group from ACP. This is Acyl carrier protein phosphodiesterase from Salmonella agona (strain SL483).